A 521-amino-acid chain; its full sequence is Manganese transporter pdt1 (521 aa).

Phosphoserine is present on serine 42. Threonine 43 carries the post-translational modification Phosphothreonine. The next 12 helical transmembrane spans lie at 71–91 (YCKFIGPGFLIAVAYIDPGNY), 104–124 (KLLFIVFLSNLFAVYLQSLCI), 152–172 (VLAEIAIIATDIAEVIGTAVA), 179–199 (IPLVAGVVITILDVLLVLIAW), 210–230 (IFETAVALLVLVVAISFAVVL), 233–253 (VHIGGAGTVFKGFLPSSTVFS), 260–280 (SIGILGATVMPHSLFLGSGLV), 325–345 (LFTFALFTNSSILIVAGAVFY), 373–393 (LFAVALLFSGMSAGYVCTIAG), 417–437 (IAIIPCLVVSAAVGQSGLNQV), 440–460 (ASQVCLSILLPFLTFPLVMFT), and 495–515 (IVTWAIWLFLTALNLLLIVWL).

Belongs to the NRAMP family.

It is found in the endoplasmic reticulum membrane. Its function is as follows. Transports manganese ions into the cell. Regulates cell morphogenesis through control of manganese homeostasis. This Schizosaccharomyces pombe (strain 972 / ATCC 24843) (Fission yeast) protein is Manganese transporter pdt1 (pdt1).